Here is a 103-residue protein sequence, read N- to C-terminus: Histone H4 (103 aa).

Residues 1–14 are compositionally biased toward gly residues; that stretch reads MSGRGKGGKGLGKG. The segment at 1–20 is disordered; that stretch reads MSGRGKGGKGLGKGGAKRHR. Serine 2 is modified (N-acetylserine). 2 positions are modified to N6-acetyl-N6-methyllysine; alternate: lysine 6 and lysine 13. N6-acetyllysine is present on lysine 17. A DNA-binding region spans residues 17–21; it reads KRHRK. Position 21 is an N6-methyllysine (lysine 21).

Belongs to the histone H4 family. The nucleosome is a histone octamer containing two molecules each of H2A, H2B, H3 and H4 assembled in one H3-H4 heterotetramer and two H2A-H2B heterodimers. The octamer wraps approximately 147 bp of DNA.

The protein localises to the nucleus. Its subcellular location is the chromosome. Core component of nucleosome. Nucleosomes wrap and compact DNA into chromatin, limiting DNA accessibility to the cellular machineries which require DNA as a template. Histones thereby play a central role in transcription regulation, DNA repair, DNA replication and chromosomal stability. DNA accessibility is regulated via a complex set of post-translational modifications of histones, also called histone code, and nucleosome remodeling. The protein is Histone H4 of Holothuria tubulosa (Tubular sea cucumber).